The sequence spans 269 residues: 3-methyl-2-oxobutanoate hydroxymethyltransferase (269 aa).

Positions 50 and 89 each coordinate Mg(2+). 3-methyl-2-oxobutanoate-binding positions include 50 to 51 (DS), D89, and K118. E120 is a binding site for Mg(2+). E187 (proton acceptor) is an active-site residue.

This sequence belongs to the PanB family. As to quaternary structure, homodecamer; pentamer of dimers. Mg(2+) serves as cofactor.

It localises to the cytoplasm. The enzyme catalyses 3-methyl-2-oxobutanoate + (6R)-5,10-methylene-5,6,7,8-tetrahydrofolate + H2O = 2-dehydropantoate + (6S)-5,6,7,8-tetrahydrofolate. It functions in the pathway cofactor biosynthesis; (R)-pantothenate biosynthesis; (R)-pantoate from 3-methyl-2-oxobutanoate: step 1/2. Catalyzes the reversible reaction in which hydroxymethyl group from 5,10-methylenetetrahydrofolate is transferred onto alpha-ketoisovalerate to form ketopantoate. The protein is 3-methyl-2-oxobutanoate hydroxymethyltransferase of Nitrosomonas europaea (strain ATCC 19718 / CIP 103999 / KCTC 2705 / NBRC 14298).